We begin with the raw amino-acid sequence, 349 residues long: Dipeptide transport ATP-binding protein DppD (349 aa).

An ABC transporter domain is found at 7–258; the sequence is LEVKNLHVNF…PQHPYTWGLL (252 aa). 43–50 provides a ligand contact to ATP; sequence GESGSGKS.

This sequence belongs to the ABC transporter superfamily. As to quaternary structure, the complex is composed of two ATP-binding proteins (DppD and DppF), two transmembrane proteins (DppB and DppC) and a solute-binding protein (DppA).

Its subcellular location is the cell membrane. The catalysed reaction is a dipeptide(out) + ATP + H2O = a dipeptide(in) + ADP + phosphate + H(+). Part of the ABC transporter DppABCDF involved in dipeptide transport. Responsible for energy coupling to the transport system. The protein is Dipeptide transport ATP-binding protein DppD of Lactococcus lactis subsp. cremoris (strain MG1363).